The chain runs to 176 residues: ATP-dependent protease subunit HslV (176 aa).

Threonine 2 is a catalytic residue. Residues glycine 157, cysteine 160, and threonine 163 each contribute to the Na(+) site.

Belongs to the peptidase T1B family. HslV subfamily. As to quaternary structure, a double ring-shaped homohexamer of HslV is capped on each side by a ring-shaped HslU homohexamer. The assembly of the HslU/HslV complex is dependent on binding of ATP.

It is found in the cytoplasm. The enzyme catalyses ATP-dependent cleavage of peptide bonds with broad specificity.. Allosterically activated by HslU binding. In terms of biological role, protease subunit of a proteasome-like degradation complex believed to be a general protein degrading machinery. This is ATP-dependent protease subunit HslV from Klebsiella pneumoniae (strain 342).